The following is a 267-amino-acid chain: Indole-3-glycerol phosphate synthase (267 aa).

This sequence belongs to the TrpC family.

It catalyses the reaction 1-(2-carboxyphenylamino)-1-deoxy-D-ribulose 5-phosphate + H(+) = (1S,2R)-1-C-(indol-3-yl)glycerol 3-phosphate + CO2 + H2O. The protein operates within amino-acid biosynthesis; L-tryptophan biosynthesis; L-tryptophan from chorismate: step 4/5. This Delftia acidovorans (strain DSM 14801 / SPH-1) protein is Indole-3-glycerol phosphate synthase.